The chain runs to 319 residues: MKTFLILALLAIVATTATTAVRVPVPQLQPQNPSQQQPQEQVPLVQQQQFPGQQQQFPPQQPYPQPQPFPSQQPYLQLQPFPQPQPFPPQLPYPQPQSFPPQQPYPQQQPQYLQPQQPISQQQAQQQQQQQQQQQQQQQILQQILQQQLIPCRDVVLQQHNIAHASSQVLQQSTYQLLQQLCCQQLLQIPEQSQCQAIHNVAHAIIMHQQQQQQQEQKQQLQQQQQQQQQLQQQQQQQQQQPSSQVSFQQPQQQYPSSQVSFQPSQLNPQAQGSVQPQQLPQFAEIRNLALQTLPAMCNVYIPPHCSTTIAPFGISGTN.

An N-terminal signal peptide occupies residues 1 to 20 (MKTFLILALLAIVATTATTA). Positions 28–58 (LQPQNPSQQQPQEQVPLVQQQQFPGQQQQFP) are enriched in low complexity. Disordered regions lie at residues 28–125 (LQPQ…QQAQ) and 258–278 (SQVS…VQPQ). Pro residues-rich tracts occupy residues 59–71 (PQQP…PFPS) and 81–104 (FPQP…PQQP). The segment covering 105-125 (YPQQQPQYLQPQQPISQQQAQ) has biased composition (low complexity). Positions 267-278 (LNPQAQGSVQPQ) are enriched in polar residues.

This sequence belongs to the gliadin/glutenin family. In terms of processing, substrate of transglutaminase.

Gliadin is the major seed storage protein in wheat. The sequence is that of Alpha/beta-gliadin A-V from Triticum aestivum (Wheat).